A 700-amino-acid chain; its full sequence is E3 ubiquitin-protein ligase SspH1 (700 aa).

The interaction with target proteins stretch occupies residues Met-1 to Met-395. LRR repeat units lie at residues His-217–Leu-238, Arg-239–Gln-257, Gly-258–Leu-279, Gly-280–Pro-297, Ala-298–Leu-319, Gln-320–Pro-337, Gly-338–Ser-360, and Ser-361–Arg-381. The segment at Ala-396 to Glu-403 is linker. Residues Ala-404–Asn-700 are E3 ubiquitin-protein ligase catalytic domain. The region spanning Ala-406–Asn-700 is the NEL domain. Cys-492 serves as the catalytic Glycyl thioester intermediate.

Belongs to the LRR-containing bacterial E3 ligase family. Interacts (via leucine-rich repeat region) with host PKN1 (via the second REM repeat). Post-translationally, ubiquitinated in the presence of host E1 ubiquitin-activating enzyme, E2 ubiquitin-conjugating enzyme and ubiquitin.

The protein resides in the secreted. The protein localises to the host cytoplasm. Its subcellular location is the host nucleus. It catalyses the reaction S-ubiquitinyl-[E2 ubiquitin-conjugating enzyme]-L-cysteine + [acceptor protein]-L-lysine = [E2 ubiquitin-conjugating enzyme]-L-cysteine + N(6)-ubiquitinyl-[acceptor protein]-L-lysine.. Exists in an autoinhibited state in the absence of substrate protein, due to interactions of the leucine-rich repeat domain with the catalytic domain. Is activated upon binding to a substrate protein. Functionally, effector proteins function to alter host cell physiology and promote bacterial survival in host tissues. This protein is an E3 ubiquitin-protein ligase that interferes with the host's ubiquitination pathway and targets host proteins for proteasomal degradation. Can ubiquitinate ubiquitin, giving rise to polyubiquitin chains (in vitro). Polyubiquitinates host PKN1, leading to its proteasomal degradation. Down-modulates production of host pro-inflammatory cytokines by inhibiting NF-kappa-B-dependent gene expression; this depends only partially on its E3 ubiquitin-protein ligase activity. The protein is E3 ubiquitin-protein ligase SspH1 (sspH1) of Salmonella typhimurium (strain 14028s / SGSC 2262).